Here is a 70-residue protein sequence, read N- to C-terminus: MAVEKINASSSLAEVVDRILDKGVVVDAWVRVSLVGIELLAVEARVVVAGVDTYLKYAEAVGLTASAQAA.

The protein belongs to the gas vesicle GvpA family. In terms of assembly, the gas vesicle shell is 2 nm thick and consists of a single layer of this protein. It forms helical ribs nearly perpendicular to the long axis of the vesicle.

The protein resides in the gas vesicle shell. In terms of biological role, gas vesicles are hollow, gas filled proteinaceous nanostructures found in some microorganisms. During planktonic growth they allow positioning of the organism at a favorable depth for light or nutrient acquisition. GvpA forms the protein shell. This chain is Gas vesicle protein A, found in Ancylobacter aquaticus.